The sequence spans 221 residues: Iron-sulfur cluster repair protein YtfE (221 aa).

It belongs to the RIC family. YtfE subfamily. As to quaternary structure, homodimer.

It is found in the cytoplasm. Its function is as follows. Di-iron-containing protein involved in the repair of iron-sulfur clusters damaged by oxidative and nitrosative stress conditions. The polypeptide is Iron-sulfur cluster repair protein YtfE (Yersinia pestis bv. Antiqua (strain Antiqua)).